We begin with the raw amino-acid sequence, 206 residues long: ATP-dependent dethiobiotin synthetase BioD (206 aa).

An ATP-binding site is contributed by 12 to 17 (GVGKTI). Thr16 provides a ligand contact to Mg(2+). Lys32 is an active-site residue. 2 residues coordinate Mg(2+): His46 and Glu98. 98–101 (EGAG) serves as a coordination point for ATP.

Belongs to the dethiobiotin synthetase family. In terms of assembly, homodimer. It depends on Mg(2+) as a cofactor.

It is found in the cytoplasm. The enzyme catalyses (7R,8S)-7,8-diammoniononanoate + CO2 + ATP = (4R,5S)-dethiobiotin + ADP + phosphate + 3 H(+). It participates in cofactor biosynthesis; biotin biosynthesis; biotin from 7,8-diaminononanoate: step 1/2. Functionally, catalyzes a mechanistically unusual reaction, the ATP-dependent insertion of CO2 between the N7 and N8 nitrogen atoms of 7,8-diaminopelargonic acid (DAPA, also called 7,8-diammoniononanoate) to form a ureido ring. The polypeptide is ATP-dependent dethiobiotin synthetase BioD (Novosphingobium aromaticivorans (strain ATCC 700278 / DSM 12444 / CCUG 56034 / CIP 105152 / NBRC 16084 / F199)).